The following is a 287-amino-acid chain: Putative ankyrin repeat protein R791 (287 aa).

ANK repeat units lie at residues 40–71 (HNFN…PLVF), 76–105 (NVHD…NIET), 107–134 (NDDV…IDNK), 135–164 (TIFE…DIKA), 165–194 (KDNF…TIDI), 196–224 (DDTY…DYRT), and 225–254 (VDDL…DIEA).

The sequence is that of Putative ankyrin repeat protein R791 from Acanthamoeba polyphaga (Amoeba).